We begin with the raw amino-acid sequence, 341 residues long: Anthranilate phosphoribosyltransferase (341 aa).

Residues G79, 82–83 (GD), T87, 89–92 (NIST), 107–115 (KHGNRAASS), and S119 contribute to the 5-phospho-alpha-D-ribose 1-diphosphate site. An anthranilate-binding site is contributed by G79. Residue S91 coordinates Mg(2+). N110 is a binding site for anthranilate. Residue R165 participates in anthranilate binding. Residues D224 and E225 each contribute to the Mg(2+) site.

It belongs to the anthranilate phosphoribosyltransferase family. Homodimer. Requires Mg(2+) as cofactor.

The catalysed reaction is N-(5-phospho-beta-D-ribosyl)anthranilate + diphosphate = 5-phospho-alpha-D-ribose 1-diphosphate + anthranilate. It functions in the pathway amino-acid biosynthesis; L-tryptophan biosynthesis; L-tryptophan from chorismate: step 2/5. Functionally, catalyzes the transfer of the phosphoribosyl group of 5-phosphorylribose-1-pyrophosphate (PRPP) to anthranilate to yield N-(5'-phosphoribosyl)-anthranilate (PRA). The polypeptide is Anthranilate phosphoribosyltransferase (Dehalococcoides mccartyi (strain ATCC BAA-2266 / KCTC 15142 / 195) (Dehalococcoides ethenogenes (strain 195))).